Here is a 347-residue protein sequence, read N- to C-terminus: DNA-directed RNA polymerase subunit alpha (347 aa).

Residues 1-226 form an alpha N-terminal domain (alpha-NTD) region; it reads MLISQRPTLS…ELFGLARELN (226 aa). Residues 241–347 are alpha C-terminal domain (alpha-CTD); that stretch reads ADHIASFALP…DQDYAETEQL (107 aa).

The protein belongs to the RNA polymerase alpha chain family. As to quaternary structure, homodimer. The RNAP catalytic core consists of 2 alpha, 1 beta, 1 beta' and 1 omega subunit. When a sigma factor is associated with the core the holoenzyme is formed, which can initiate transcription.

The catalysed reaction is RNA(n) + a ribonucleoside 5'-triphosphate = RNA(n+1) + diphosphate. DNA-dependent RNA polymerase catalyzes the transcription of DNA into RNA using the four ribonucleoside triphosphates as substrates. The chain is DNA-directed RNA polymerase subunit alpha from Mycobacterium avium (strain 104).